A 279-amino-acid polypeptide reads, in one-letter code: Probable cyclic nucleotide phosphodiesterase Psyc_2036 (279 aa).

Asp23, His25, Asp70, Asn100, His179, His218, and His220 together coordinate Fe cation. Residues His25, Asp70, and 100 to 101 (NH) contribute to the AMP site. His220 serves as a coordination point for AMP.

Belongs to the cyclic nucleotide phosphodiesterase class-III family. It depends on Fe(2+) as a cofactor.

The polypeptide is Probable cyclic nucleotide phosphodiesterase Psyc_2036 (Psychrobacter arcticus (strain DSM 17307 / VKM B-2377 / 273-4)).